A 308-amino-acid polypeptide reads, in one-letter code: Phosphoribosylaminoimidazole-succinocarboxamide synthase (308 aa).

This sequence belongs to the SAICAR synthetase family.

The catalysed reaction is 5-amino-1-(5-phospho-D-ribosyl)imidazole-4-carboxylate + L-aspartate + ATP = (2S)-2-[5-amino-1-(5-phospho-beta-D-ribosyl)imidazole-4-carboxamido]succinate + ADP + phosphate + 2 H(+). The protein operates within purine metabolism; IMP biosynthesis via de novo pathway; 5-amino-1-(5-phospho-D-ribosyl)imidazole-4-carboxamide from 5-amino-1-(5-phospho-D-ribosyl)imidazole-4-carboxylate: step 1/2. The protein is Phosphoribosylaminoimidazole-succinocarboxamide synthase of Xylella fastidiosa (strain 9a5c).